Consider the following 485-residue polypeptide: dTDP-4-amino-4,6-dideoxy-D-glucose ammonia-lyase (485 aa).

[4Fe-4S] cluster is bound by residues Cys-141, Cys-145, and Cys-148.

It belongs to the radical SAM superfamily. DesII family. Monomer. [4Fe-4S] cluster is required as a cofactor.

The enzyme catalyses dTDP-4-amino-4,6-dideoxy-alpha-D-glucose + AH2 + S-adenosyl-L-methionine = dTDP-3-dehydro-4,6-dideoxy-alpha-D-glucose + 5'-deoxyadenosine + L-methionine + A + NH4(+) + H(+). Functionally, involved in the biosynthesis of dTDP-alpha-D-desosamine, a sugar found in several bacterial macrolide antibiotics. Catalyzes the SAM-dependent deamination of dTDP-4-amino-4,6-deoxyglucose (dTDP-viosamine) to yield dTDP-3-keto-4,6-deoxyglucose. It can also catalyze the oxidative dehydrogenation of the non-physiological substrate dTDP-D-quinovose to dTDP-3-keto-6-deoxy-d-glucose. It can also deaminate dTDP-3-amino-3,6-deoxyglucose. In Streptomyces venezuelae, this protein is dTDP-4-amino-4,6-dideoxy-D-glucose ammonia-lyase.